The following is a 187-amino-acid chain: Ribosome-recycling factor (187 aa).

It belongs to the RRF family.

The protein resides in the cytoplasm. Its function is as follows. Responsible for the release of ribosomes from messenger RNA at the termination of protein biosynthesis. May increase the efficiency of translation by recycling ribosomes from one round of translation to another. This is Ribosome-recycling factor from Rhodopseudomonas palustris (strain BisB5).